The sequence spans 91 residues: Small ribosomal subunit protein uS19 (91 aa).

The protein belongs to the universal ribosomal protein uS19 family.

Functionally, protein S19 forms a complex with S13 that binds strongly to the 16S ribosomal RNA. This Syntrophotalea carbinolica (strain DSM 2380 / NBRC 103641 / GraBd1) (Pelobacter carbinolicus) protein is Small ribosomal subunit protein uS19.